A 217-amino-acid chain; its full sequence is Superoxide dismutase [Cu-Zn], chloroplastic (217 aa).

The N-terminal 63 residues, 1–63 (MAAHSIFTTT…TTPKPLTVFA (63 aa)), are a transit peptide targeting the chloroplast. Residues His-109, His-111, and His-126 each contribute to the Cu cation site. Cys-120 and Cys-209 form a disulfide bridge. Zn(2+) is bound by residues His-126, His-134, His-143, and Asp-146. His-183 is a binding site for Cu cation.

Belongs to the Cu-Zn superoxide dismutase family. Homotetramer. Cu cation is required as a cofactor. Zn(2+) serves as cofactor.

Its subcellular location is the plastid. It is found in the chloroplast. It catalyses the reaction 2 superoxide + 2 H(+) = H2O2 + O2. Functionally, destroys radicals which are normally produced within the cells and which are toxic to biological systems. The protein is Superoxide dismutase [Cu-Zn], chloroplastic (SODCP.2) of Solanum lycopersicum (Tomato).